The chain runs to 373 residues: StAR-related lipid transfer protein 7, mitochondrial (373 aa).

The transit peptide at 1 to 61 (MFPRRPPATL…YSESSRCALL (61 aa)) directs the protein to the mitochondrion. The stretch at 89–114 (DEERIQEEELQRSINEMKRLEEMSNI) forms a coiled coil. One can recognise an START domain in the interval 115–330 (FQSSGVENYP…LHMATLKAKN (216 aa)). 2 disordered regions span residues 118 to 141 (SGVENYPPEPKSPAGGNEKSKDKE) and 347 to 373 (SSEAKATAPSPERKNEGSCGPARIEYA).

Post-translationally, proteolytically cleaved by PARL. Expressed in epithelial cells of airways, peripheral bronchioles and alveoli, as well as in the basal cell layer of the epidermis (at protein level).

Its subcellular location is the mitochondrion. Its function is as follows. May play a protective role in mucosal tissues by preventing exaggerated allergic responses. The protein is StAR-related lipid transfer protein 7, mitochondrial (Stard7) of Mus musculus (Mouse).